Reading from the N-terminus, the 300-residue chain is ESX-5 secretion-associated protein EspG5 (300 aa).

Belongs to the EspG family. Interacts specifically with ESX-5-dependent PE/PPE proteins. Binds PPE33 and PPE18. Does not interact with EsxN. Monomer in solution.

The protein localises to the cytoplasm. Specific chaperone for cognate PE/PPE proteins. Plays an important role in preventing aggregation of PE/PPE dimers. Required for LipY and PE31/PPE18 secretion. The protein is ESX-5 secretion-associated protein EspG5 of Mycobacterium marinum (strain ATCC BAA-535 / M).